The sequence spans 267 residues: Tryptophan synthase alpha chain (267 aa).

Catalysis depends on proton acceptor residues glutamate 47 and aspartate 58.

It belongs to the TrpA family. As to quaternary structure, tetramer of two alpha and two beta chains.

It catalyses the reaction (1S,2R)-1-C-(indol-3-yl)glycerol 3-phosphate + L-serine = D-glyceraldehyde 3-phosphate + L-tryptophan + H2O. It participates in amino-acid biosynthesis; L-tryptophan biosynthesis; L-tryptophan from chorismate: step 5/5. The alpha subunit is responsible for the aldol cleavage of indoleglycerol phosphate to indole and glyceraldehyde 3-phosphate. The sequence is that of Tryptophan synthase alpha chain from Pelodictyon phaeoclathratiforme (strain DSM 5477 / BU-1).